We begin with the raw amino-acid sequence, 366 residues long: Sigma54-dependent transcriptional activator SfnR (366 aa).

The Sigma-54 factor interaction domain maps to glutamine 21–leucine 250. Residues glycine 49 to glutamate 56 and alanine 112 to glutamate 121 contribute to the ATP site.

Its function is as follows. Involved in the dimethyl sulfide degradation pathway. Activates the expression of sfnG and sfnF. The sequence is that of Sigma54-dependent transcriptional activator SfnR from Pseudomonas putida (Arthrobacter siderocapsulatus).